We begin with the raw amino-acid sequence, 321 residues long: Anthranilate phosphoribosyltransferase (321 aa).

5-phospho-alpha-D-ribose 1-diphosphate is bound by residues Gly72, 75-76 (GD), Thr80, 82-85 (NVST), 99-107 (KHGNVSITS), and Ser111. Gly72 provides a ligand contact to anthranilate. A Mg(2+)-binding site is contributed by Ser84. Asn102 contacts anthranilate. Residue Arg157 coordinates anthranilate. 2 residues coordinate Mg(2+): Asp216 and Glu217.

This sequence belongs to the anthranilate phosphoribosyltransferase family. In terms of assembly, homodimer. Mg(2+) serves as cofactor.

It catalyses the reaction N-(5-phospho-beta-D-ribosyl)anthranilate + diphosphate = 5-phospho-alpha-D-ribose 1-diphosphate + anthranilate. It participates in amino-acid biosynthesis; L-tryptophan biosynthesis; L-tryptophan from chorismate: step 2/5. In terms of biological role, catalyzes the transfer of the phosphoribosyl group of 5-phosphorylribose-1-pyrophosphate (PRPP) to anthranilate to yield N-(5'-phosphoribosyl)-anthranilate (PRA). The sequence is that of Anthranilate phosphoribosyltransferase from Methanococcus maripaludis (strain C5 / ATCC BAA-1333).